The chain runs to 238 residues: Uridylate kinase (238 aa).

12–15 (KLSG) contributes to the ATP binding site. Gly54 contributes to the UMP binding site. The ATP site is built by Gly55 and Arg59. UMP is bound by residues Asp74 and 135–142 (TGNPFFTT). Residues Thr162, Tyr168, and Asp171 each coordinate ATP.

This sequence belongs to the UMP kinase family. Homohexamer.

The protein resides in the cytoplasm. The enzyme catalyses UMP + ATP = UDP + ADP. It participates in pyrimidine metabolism; CTP biosynthesis via de novo pathway; UDP from UMP (UMPK route): step 1/1. Its activity is regulated as follows. Inhibited by UTP. Catalyzes the reversible phosphorylation of UMP to UDP. This chain is Uridylate kinase, found in Aromatoleum aromaticum (strain DSM 19018 / LMG 30748 / EbN1) (Azoarcus sp. (strain EbN1)).